We begin with the raw amino-acid sequence, 301 residues long: Ribosomal RNA small subunit methyltransferase H (301 aa).

S-adenosyl-L-methionine contacts are provided by residues 25–27 (GGH), aspartate 45, phenylalanine 72, aspartate 94, and glutamine 101.

It belongs to the methyltransferase superfamily. RsmH family.

The protein localises to the cytoplasm. The catalysed reaction is cytidine(1402) in 16S rRNA + S-adenosyl-L-methionine = N(4)-methylcytidine(1402) in 16S rRNA + S-adenosyl-L-homocysteine + H(+). Specifically methylates the N4 position of cytidine in position 1402 (C1402) of 16S rRNA. This is Ribosomal RNA small subunit methyltransferase H from Methylococcus capsulatus (strain ATCC 33009 / NCIMB 11132 / Bath).